The following is a 416-amino-acid chain: Cysteate synthase (416 aa).

N6-(pyridoxal phosphate)lysine is present on Lys-104. Asn-130 contributes to the pyridoxal 5'-phosphate binding site.

The protein belongs to the threonine synthase family. Cysteate synthase subfamily. In terms of assembly, homotrimer. Pyridoxal 5'-phosphate is required as a cofactor.

The enzyme catalyses O-phospho-L-serine + sulfite + H(+) = L-cysteate + phosphate. Its pathway is cofactor biosynthesis; coenzyme M biosynthesis. Is inhibited by AP3 (DL-2-amino-3-phosphonopropionate) and, to a lesser extent, by L-aspartate or AP4 (DL-2-amino-4-phosphonobutyrate). Is also inhibited by EDTA in vitro. Its function is as follows. Specifically catalyzes the beta-elimination of phosphate from L-phosphoserine and the beta-addition of sulfite to the dehydroalanine intermediate to produce L-cysteate. Does not display threonine synthase activity like the paralog protein ThrC. The sequence is that of Cysteate synthase from Methanosarcina acetivorans (strain ATCC 35395 / DSM 2834 / JCM 12185 / C2A).